Consider the following 128-residue polypeptide: Mite group 2 allergen Gly d 2.01 (128 aa).

The protein belongs to the NPC2 family.

The protein localises to the secreted. This chain is Mite group 2 allergen Gly d 2.01, found in Glycyphagus domesticus (House itch mite).